Reading from the N-terminus, the 145-residue chain is Leghemoglobin-1 (145 aa).

The region spanning 3 to 145 (AFSDKQEALV…ELAAAIKKAY (143 aa)) is the Globin domain. Nitrated tyrosine is present on residues tyrosine 26 and tyrosine 31. Serine 46 lines the heme b pocket. A Phosphoserine modification is found at serine 46. Histidine 62 is an O2 binding site. Heme b-binding residues include lysine 65, histidine 93, and lysine 96. Tyrosine 134 bears the Nitrated tyrosine mark.

It belongs to the plant globin family. In terms of assembly, monomer. In terms of processing, nitrated in effective nodules and particularly in hypoxic conditions; this mechanism may play a protective role in the symbiosis by buffering toxic peroxynitrite NO(2)(-). Nitration level decrease during nodule senescence. Post-translationally, phosphorylation at Ser-46 disrupts the molecular environment of its porphyrin ring oxygen binding pocket, thus leading to a reduced oxygen consumption and to the delivery of oxygen O(2) to symbiosomes. In terms of tissue distribution, root nodules.

It localises to the cytoplasm. The protein resides in the cytosol. The protein localises to the nucleus. Functionally, leghemoglobin that reversibly binds oxygen O(2) through a pentacoordinated heme iron. In root nodules, facilitates the diffusion of oxygen to the bacteroids while preventing the bacterial nitrogenase from being inactivated by buffering dioxygen, nitric oxide and carbon monoxide, and promoting the formation of reactive oxygen species (ROS, e.g. H(2)O(2)). This role is essential for symbiotic nitrogen fixation (SNF). This is Leghemoglobin-1 from Vigna unguiculata (Cowpea).